Here is a 58-residue protein sequence, read N- to C-terminus: UPF0391 membrane protein Gbem_0127 (58 aa).

The next 2 helical transmembrane spans lie at 4–24 (WALIFFIIAIIAAVFGFGGIA) and 33–53 (ILFYLFLVVAVVMLVSALLAG).

Belongs to the UPF0391 family.

The protein localises to the cell membrane. In Citrifermentans bemidjiense (strain ATCC BAA-1014 / DSM 16622 / JCM 12645 / Bem) (Geobacter bemidjiensis), this protein is UPF0391 membrane protein Gbem_0127.